Consider the following 318-residue polypeptide: Methionyl-tRNA formyltransferase (318 aa).

112–115 contributes to the (6S)-5,6,7,8-tetrahydrofolate binding site; the sequence is SILP.

Belongs to the Fmt family.

It carries out the reaction L-methionyl-tRNA(fMet) + (6R)-10-formyltetrahydrofolate = N-formyl-L-methionyl-tRNA(fMet) + (6S)-5,6,7,8-tetrahydrofolate + H(+). In terms of biological role, attaches a formyl group to the free amino group of methionyl-tRNA(fMet). The formyl group appears to play a dual role in the initiator identity of N-formylmethionyl-tRNA by promoting its recognition by IF2 and preventing the misappropriation of this tRNA by the elongation apparatus. The polypeptide is Methionyl-tRNA formyltransferase (Shewanella putrefaciens (strain CN-32 / ATCC BAA-453)).